Here is a 431-residue protein sequence, read N- to C-terminus: Na(+)-translocating NADH-quinone reductase subunit F (431 aa).

A helical membrane pass occupies residues 10–30; sequence IFVASAAFCSLGLILVAVILL. Residues 41-133 enclose the 2Fe-2S ferredoxin-type domain; it reads CKLKINNDDS…DLCLEVEERY (93 aa). The [2Fe-2S] cluster site is built by C76, C82, C85, and C117. The FAD-binding FR-type domain maps to 136 to 286; that stretch reads ASSWEGTVVS…SGPYGESFMK (151 aa). The catalytic stretch occupies residues 289 to 413; that stretch reads NRPVIFLIGG…ALHNSSILTL (125 aa).

It belongs to the NqrF family. In terms of assembly, composed of six subunits; NqrA, NqrB, NqrC, NqrD, NqrE and NqrF. It depends on [2Fe-2S] cluster as a cofactor. The cofactor is FAD.

It is found in the cell inner membrane. It carries out the reaction a ubiquinone + n Na(+)(in) + NADH + H(+) = a ubiquinol + n Na(+)(out) + NAD(+). NQR complex catalyzes the reduction of ubiquinone-1 to ubiquinol by two successive reactions, coupled with the transport of Na(+) ions from the cytoplasm to the periplasm. The first step is catalyzed by NqrF, which accepts electrons from NADH and reduces ubiquinone-1 to ubisemiquinone by a one-electron transfer pathway. In Chlamydia trachomatis serovar D (strain ATCC VR-885 / DSM 19411 / UW-3/Cx), this protein is Na(+)-translocating NADH-quinone reductase subunit F.